Consider the following 162-residue polypeptide: Phosphopantetheine adenylyltransferase (162 aa).

Substrate is bound at residue serine 11. ATP-binding positions include 11 to 12 (SF) and histidine 19. Residues lysine 43, valine 76, and arginine 90 each coordinate substrate. Residues 91 to 93 (GLR), glutamate 101, and 126 to 132 (HLYISSS) contribute to the ATP site.

This sequence belongs to the bacterial CoaD family. In terms of assembly, homohexamer. It depends on Mg(2+) as a cofactor.

The protein localises to the cytoplasm. The enzyme catalyses (R)-4'-phosphopantetheine + ATP + H(+) = 3'-dephospho-CoA + diphosphate. It functions in the pathway cofactor biosynthesis; coenzyme A biosynthesis; CoA from (R)-pantothenate: step 4/5. Its function is as follows. Reversibly transfers an adenylyl group from ATP to 4'-phosphopantetheine, yielding dephospho-CoA (dPCoA) and pyrophosphate. This chain is Phosphopantetheine adenylyltransferase, found in Streptococcus pneumoniae (strain JJA).